A 127-amino-acid chain; its full sequence is Glycine cleavage system H protein (127 aa).

The 83-residue stretch at 22–104 folds into the Lipoyl-binding domain; it reads TVRIGITDFA…YDKAWMIVIE (83 aa). Lys63 is subject to N6-lipoyllysine.

This sequence belongs to the GcvH family. In terms of assembly, the glycine cleavage system is composed of four proteins: P, T, L and H. It depends on (R)-lipoate as a cofactor.

The glycine cleavage system catalyzes the degradation of glycine. The H protein shuttles the methylamine group of glycine from the P protein to the T protein. In terms of biological role, is also involved in protein lipoylation via its role as an octanoyl/lipoyl carrier protein intermediate. This chain is Glycine cleavage system H protein, found in Anoxybacillus flavithermus (strain DSM 21510 / WK1).